Consider the following 73-residue polypeptide: UPF0235 protein HY04AAS1_1378 (73 aa).

Belongs to the UPF0235 family.

The sequence is that of UPF0235 protein HY04AAS1_1378 from Hydrogenobaculum sp. (strain Y04AAS1).